The primary structure comprises 552 residues: Phosphoglucomutase (552 aa).

S143 (phosphoserine intermediate) is an active-site residue. Positions 143, 295, 297, and 299 each coordinate Mg(2+).

Belongs to the phosphohexose mutase family. The cofactor is Mg(2+).

It carries out the reaction alpha-D-glucose 1-phosphate = alpha-D-glucose 6-phosphate. Its pathway is glycolipid metabolism; diglucosyl-diacylglycerol biosynthesis. Catalyzes the interconversion between glucose-6-phosphate and alpha-glucose-1-phosphate. This is the first step in the biosynthesis of diglucosyl-diacylglycerol (Glc2-DAG), i.e. the predominant glycolipid found in the S.aureus membrane, which is also used as a membrane anchor for lipoteichoic acid (LTA). This chain is Phosphoglucomutase (pgcA), found in Staphylococcus aureus (strain MSSA476).